We begin with the raw amino-acid sequence, 187 residues long: Putative acyl-coenzyme A oxidase At3g06690 (187 aa).

A disordered region spans residues methionine 1–proline 21.

This sequence belongs to the acyl-CoA oxidase family.

The catalysed reaction is a 2,3-saturated acyl-CoA + O2 = a (2E)-enoyl-CoA + H2O2. The chain is Putative acyl-coenzyme A oxidase At3g06690 from Arabidopsis thaliana (Mouse-ear cress).